The sequence spans 103 residues: UPF0145 protein Rsph17025_2361 (103 aa).

Belongs to the UPF0145 family.

This chain is UPF0145 protein Rsph17025_2361, found in Cereibacter sphaeroides (strain ATCC 17025 / ATH 2.4.3) (Rhodobacter sphaeroides).